Consider the following 395-residue polypeptide: 1-deoxy-D-xylulose 5-phosphate reductoisomerase (395 aa).

Residues Thr-10, Gly-11, Ser-12, Ile-13, Asn-38, and Asn-122 each coordinate NADPH. Lys-123 lines the 1-deoxy-D-xylulose 5-phosphate pocket. An NADPH-binding site is contributed by Glu-124. Asp-148 contributes to the Mn(2+) binding site. Residues Ser-149, Glu-150, Ser-178, and His-200 each contribute to the 1-deoxy-D-xylulose 5-phosphate site. A Mn(2+)-binding site is contributed by Glu-150. Gly-206 serves as a coordination point for NADPH. 4 residues coordinate 1-deoxy-D-xylulose 5-phosphate: Ser-213, Asn-218, Lys-219, and Glu-222. Mn(2+) is bound at residue Glu-222.

This sequence belongs to the DXR family. The cofactor is Mg(2+). It depends on Mn(2+) as a cofactor.

It carries out the reaction 2-C-methyl-D-erythritol 4-phosphate + NADP(+) = 1-deoxy-D-xylulose 5-phosphate + NADPH + H(+). It participates in isoprenoid biosynthesis; isopentenyl diphosphate biosynthesis via DXP pathway; isopentenyl diphosphate from 1-deoxy-D-xylulose 5-phosphate: step 1/6. In terms of biological role, catalyzes the NADPH-dependent rearrangement and reduction of 1-deoxy-D-xylulose-5-phosphate (DXP) to 2-C-methyl-D-erythritol 4-phosphate (MEP). In Elusimicrobium minutum (strain Pei191), this protein is 1-deoxy-D-xylulose 5-phosphate reductoisomerase.